A 233-amino-acid chain; its full sequence is Large ribosomal subunit protein uL1 (233 aa).

The protein belongs to the universal ribosomal protein uL1 family. In terms of assembly, part of the 50S ribosomal subunit.

Functionally, binds directly to 23S rRNA. The L1 stalk is quite mobile in the ribosome, and is involved in E site tRNA release. Protein L1 is also a translational repressor protein, it controls the translation of the L11 operon by binding to its mRNA. This Psychrobacter cryohalolentis (strain ATCC BAA-1226 / DSM 17306 / VKM B-2378 / K5) protein is Large ribosomal subunit protein uL1.